Here is a 374-residue protein sequence, read N- to C-terminus: Protein-glutamate methylesterase/protein-glutamine glutaminase (374 aa).

In terms of domain architecture, Response regulatory spans 4-121 (KVLVVDDSGF…SRNPDKVKQM (118 aa)). Residue aspartate 55 is modified to 4-aspartylphosphate. The tract at residues 144-186 (PVAAPVPASSPAPASSFASPAPARPAATARAAAPAASHSPAPK) is disordered. The span at 154 to 183 (PAPASSFASPAPARPAATARAAAPAASHSP) shows a compositional bias: low complexity. Positions 183–374 (PAPKRKPYKL…IGKHLVEACV (192 aa)) constitute a CheB-type methylesterase domain. Catalysis depends on residues serine 198, histidine 225, and aspartate 318.

The protein belongs to the CheB family. Phosphorylated by CheA. Phosphorylation of the N-terminal regulatory domain activates the methylesterase activity.

It localises to the cytoplasm. The catalysed reaction is [protein]-L-glutamate 5-O-methyl ester + H2O = L-glutamyl-[protein] + methanol + H(+). It catalyses the reaction L-glutaminyl-[protein] + H2O = L-glutamyl-[protein] + NH4(+). Its function is as follows. Involved in chemotaxis. Part of a chemotaxis signal transduction system that modulates chemotaxis in response to various stimuli. Catalyzes the demethylation of specific methylglutamate residues introduced into the chemoreceptors (methyl-accepting chemotaxis proteins or MCP) by CheR. Also mediates the irreversible deamidation of specific glutamine residues to glutamic acid. The polypeptide is Protein-glutamate methylesterase/protein-glutamine glutaminase (Pseudomonas putida (Arthrobacter siderocapsulatus)).